The following is a 127-amino-acid chain: uncharacterized protein (127 aa).

A helical transmembrane segment spans residues 84–103; sequence IALLSLFISLSIRITCFPFF.

The protein localises to the membrane. This is an uncharacterized protein from Saccharomyces cerevisiae (strain ATCC 204508 / S288c) (Baker's yeast).